A 122-amino-acid polypeptide reads, in one-letter code: MIQPQTHLNVADNSGARELMCIRIIGASNRRYAHIGDVIVAVIKEAVPHMPLQRSEVIRAVIVRTRKELKRDNGMIIQYDDNAAVVIDQEGNPRGTRVFGAIARELRQLNFTKIVSLAPEVL.

Belongs to the universal ribosomal protein uL14 family. Part of the 50S ribosomal subunit.

Its subcellular location is the plastid. The protein resides in the chloroplast. Binds to 23S rRNA. This Nandina domestica (Heavenly bamboo) protein is Large ribosomal subunit protein uL14c.